Here is a 962-residue protein sequence, read N- to C-terminus: Protease 3 (962 aa).

Residues 1 to 23 form the signal peptide; sequence MPRSTWFKALLLFVALWAPLSQA. His-88 is a binding site for Zn(2+). Glu-91 functions as the Proton acceptor in the catalytic mechanism. His-92 and Glu-169 together coordinate Zn(2+).

It belongs to the peptidase M16 family. In terms of assembly, monomer. It depends on Zn(2+) as a cofactor.

The protein resides in the periplasm. It catalyses the reaction Preferential cleavage of 16-Tyr-|-Leu-17 and 25-Phe-|-Tyr-26 bonds of oxidized insulin B chain. Also acts on other substrates of Mw less than 7 kDa such as insulin and glucagon.. Its function is as follows. Endopeptidase that degrades small peptides of less than 7 kDa, such as glucagon and insulin. In Shigella flexneri, this protein is Protease 3 (ptrA).